Here is a 318-residue protein sequence, read N- to C-terminus: Protoheme IX farnesyltransferase (318 aa).

A run of 9 helical transmembrane segments spans residues 29–49 (IIPL…QGQV), 51–71 (PVLL…AQTI), 102–122 (LIFA…FANL), 123–143 (LAAS…THWL), 151–171 (IVIG…AVTG), 179–199 (LIFA…ALMI), 219–239 (ATVK…LLLV), 241–261 (PLHA…AVFI), and 280–300 (LFLY…VDSL).

This sequence belongs to the UbiA prenyltransferase family. Protoheme IX farnesyltransferase subfamily.

The protein resides in the cell inner membrane. The enzyme catalyses heme b + (2E,6E)-farnesyl diphosphate + H2O = Fe(II)-heme o + diphosphate. The protein operates within porphyrin-containing compound metabolism; heme O biosynthesis; heme O from protoheme: step 1/1. Converts heme B (protoheme IX) to heme O by substitution of the vinyl group on carbon 2 of heme B porphyrin ring with a hydroxyethyl farnesyl side group. The polypeptide is Protoheme IX farnesyltransferase (Nostoc sp. (strain PCC 7120 / SAG 25.82 / UTEX 2576)).